We begin with the raw amino-acid sequence, 235 residues long: 1-(5-phosphoribosyl)-5-[(5-phosphoribosylamino)methylideneamino] imidazole-4-carboxamide isomerase (235 aa).

Asp8 functions as the Proton acceptor in the catalytic mechanism. Asp128 functions as the Proton donor in the catalytic mechanism.

Belongs to the HisA/HisF family.

It localises to the cytoplasm. It carries out the reaction 1-(5-phospho-beta-D-ribosyl)-5-[(5-phospho-beta-D-ribosylamino)methylideneamino]imidazole-4-carboxamide = 5-[(5-phospho-1-deoxy-D-ribulos-1-ylimino)methylamino]-1-(5-phospho-beta-D-ribosyl)imidazole-4-carboxamide. It participates in amino-acid biosynthesis; L-histidine biosynthesis; L-histidine from 5-phospho-alpha-D-ribose 1-diphosphate: step 4/9. In Thermus thermophilus (strain ATCC 27634 / DSM 579 / HB8), this protein is 1-(5-phosphoribosyl)-5-[(5-phosphoribosylamino)methylideneamino] imidazole-4-carboxamide isomerase.